Here is an 843-residue protein sequence, read N- to C-terminus: Protein P (843 aa).

The tract at residues 1-177 (MPLSYQHFRK…FCGSPYSWEQ (177 aa)) is terminal protein domain (TP). The interval 178–346 (DLQHGRLVFQ…YCLYHIVNLI (169 aa)) is spacer. Residues 219 to 250 (RKSRLGPQPAQGQLAGRQQGGSGSIRARVHPS) are disordered. Positions 223–235 (LGPQPAQGQLAGR) are enriched in low complexity. A polymerase/reverse transcriptase domain (RT) region spans residues 347–690 (EDWGPCTEHG…YLNLYPVARQ (344 aa)). In terms of domain architecture, Reverse transcriptase spans 357–600 (EHRIRTPRTP…YSLNFMGYVI (244 aa)). 3 residues coordinate Mg(2+): D429, D551, and D552.

It belongs to the hepadnaviridae P protein family.

The enzyme catalyses DNA(n) + a 2'-deoxyribonucleoside 5'-triphosphate = DNA(n+1) + diphosphate. It catalyses the reaction Endonucleolytic cleavage to 5'-phosphomonoester.. Activated by host HSP70 and HSP40 in vitro to be able to bind the epsilon loop of the pgRNA. Because deletion of the RNase H region renders the protein partly chaperone-independent, the chaperones may be needed indirectly to relieve occlusion of the RNA-binding site by this domain. Inhibited by several reverse-transcriptase inhibitors: Lamivudine, Adefovir and Entecavir. In terms of biological role, multifunctional enzyme that converts the viral RNA genome into dsDNA in viral cytoplasmic capsids. This enzyme displays a DNA polymerase activity that can copy either DNA or RNA templates, and a ribonuclease H (RNase H) activity that cleaves the RNA strand of RNA-DNA heteroduplexes in a partially processive 3'- to 5'-endonucleasic mode. Neo-synthesized pregenomic RNA (pgRNA) are encapsidated together with the P protein, and reverse-transcribed inside the nucleocapsid. Initiation of reverse-transcription occurs first by binding the epsilon loop on the pgRNA genome, and is initiated by protein priming, thereby the 5'-end of (-)DNA is covalently linked to P protein. Partial (+)DNA is synthesized from the (-)DNA template and generates the relaxed circular DNA (RC-DNA) genome. After budding and infection, the RC-DNA migrates in the nucleus, and is converted into a plasmid-like covalently closed circular DNA (cccDNA). The activity of P protein does not seem to be necessary for cccDNA generation, and is presumably released from (+)DNA by host nuclear DNA repair machinery. This Hepatitis B virus genotype B2 (isolate Vietnam/16091/1992) (HBV-B) protein is Protein P.